The sequence spans 128 residues: Translation initiation factor 5A (128 aa).

A Hypusine modification is found at lysine 35.

It belongs to the eIF-5A family.

The protein resides in the cytoplasm. Its function is as follows. Functions by promoting the formation of the first peptide bond. In Methanosarcina barkeri (strain Fusaro / DSM 804), this protein is Translation initiation factor 5A.